We begin with the raw amino-acid sequence, 474 residues long: Synaptotagmin-17 (474 aa).

Positions 60–112 (WLMASRSSDKDGDSVHTASEVPLTPRTNSPDGRRSSSDTSKSTYSLTRRISSL) are disordered. Over residues 96–112 (SDTSKSTYSLTRRISSL) the composition is skewed to low complexity. Phosphoserine occurs at positions 118 and 119. C2 domains are found at residues 184–310 (QLGM…HWWK) and 321–455 (ELGE…EQWH).

It belongs to the synaptotagmin family. As to expression, expressed abundantly in brain (frontal and temporal lobes, hippocampus, hypothalamus, amygdala, substantia nigra, and pituitary), kidney, and prostate. Expressed in fetal brain, kidney and lung. Expressed in melanocytes.

The protein localises to the membrane. In terms of biological role, plays a role in dendrite formation by melanocytes. The protein is Synaptotagmin-17 (SYT17) of Homo sapiens (Human).